The chain runs to 356 residues: Guanine nucleotide-binding protein alpha-3 subunit (356 aa).

Residues M1 to E26 form a disordered region. Residue G2 is the site of N-myristoyl glycine attachment. A lipid anchor (S-palmitoyl cysteine) is attached at C4. Residues K7 to R23 show a composition bias toward basic and acidic residues. Positions K34–L356 constitute a G-alpha domain. The G1 motif stretch occupies residues K37–T50. GTP-binding positions include G42–S49, L179–T185, D204–Q208, N273–D276, and A328. Positions 49 and 185 each coordinate Mg(2+). The G2 motif stretch occupies residues D177–T185. Residues I200 to R209 form a G3 motif region. The segment at I269–D276 is G4 motif. The tract at residues T326 to T331 is G5 motif.

The protein belongs to the G-alpha family. G(q) subfamily. As to quaternary structure, g proteins are composed of 3 units; alpha, beta and gamma. The alpha chain contains the guanine nucleotide binding site.

Guanine nucleotide-binding proteins (G proteins) are involved as modulators or transducers in various transmembrane signaling systems. Involved in conidiation. In Neurospora crassa (strain ATCC 24698 / 74-OR23-1A / CBS 708.71 / DSM 1257 / FGSC 987), this protein is Guanine nucleotide-binding protein alpha-3 subunit (gna-3).